The following is a 66-amino-acid chain: Large ribosomal subunit protein uL29 (66 aa).

This sequence belongs to the universal ribosomal protein uL29 family.

The protein is Large ribosomal subunit protein uL29 of Nitrosococcus oceani (strain ATCC 19707 / BCRC 17464 / JCM 30415 / NCIMB 11848 / C-107).